The chain runs to 168 residues: Endoribonuclease YbeY (168 aa).

Zn(2+) contacts are provided by His123, His127, and His133.

This sequence belongs to the endoribonuclease YbeY family. Zn(2+) serves as cofactor.

It localises to the cytoplasm. Single strand-specific metallo-endoribonuclease involved in late-stage 70S ribosome quality control and in maturation of the 3' terminus of the 16S rRNA. The chain is Endoribonuclease YbeY from Francisella tularensis subsp. holarctica (strain LVS).